Reading from the N-terminus, the 489-residue chain is Pre-glycoprotein polyprotein GP complex (489 aa).

The N-myristoyl glycine; by host moiety is linked to residue glycine 2. Residues 2-17 lie on the Extracellular side of the membrane; sequence GQIVTFFQEVPHILEE. A helical transmembrane segment spans residues 18–33; it reads VMNIVLMTLSILAILK. Residues 34-58 lie on the Cytoplasmic side of the membrane; that stretch reads GIYNVMTCGIIGLITFLFLCGRSCS. Position 57 (cysteine 57) interacts with Zn(2+). Residues 59 to 430 lie on the Extracellular side of the membrane; the sequence is SIYKDNYEFF…QSTTPLGLVD (372 aa). 6 N-linked (GlcNAc...) asparagine; by host glycosylation sites follow: asparagine 78, asparagine 88, asparagine 98, asparagine 108, asparagine 118, and asparagine 166. Cystine bridges form between cysteine 85/cysteine 229, cysteine 117/cysteine 154, cysteine 179/cysteine 210, cysteine 277/cysteine 290, cysteine 299/cysteine 308, and cysteine 362/cysteine 383. Asparagine 222 carries an N-linked (GlcNAc...) asparagine; by host glycan. Asparagine 363, asparagine 371, asparagine 388, and asparagine 393 each carry an N-linked (GlcNAc...) asparagine; by host glycan. The helical transmembrane segment at 431-451 threads the bilayer; that stretch reads LFVFSTSFYLISVFLHLIKIP. The Cytoplasmic portion of the chain corresponds to 452 to 489; it reads THRHIKGKPCPKPHRLNHMAICSCGFYKQPGLPTQWKR. Residues histidine 453, histidine 455, cysteine 461, histidine 465, cysteine 473, and cysteine 475 each coordinate Zn(2+).

It belongs to the arenaviridae GPC protein family. In terms of assembly, interacts with glycoprotein G2. Part of the GP complex (GP-C) together with glycoprotein G1 and glycoprotein G2. The GP-complex interacts with protein Z, which interacts with ribonucleocapsid; these interactions may induce virion budding. As to quaternary structure, homotrimer; disulfide-linked. In pre-fusion state, G1 homotrimers bind G2 homotrimers via ionic interactions. Part of the GP complex (GP-C) together with glycoprotein G2 and the stable signal peptide. The GP-complex interacts with protein Z, which interacts with ribonucleocapsid; these interactions may induce virion budding. Homotrimer. Interacts with the stable signal peptide. In pre-fusion state, G2 homotrimers bind G1 homotrimers via ionic interactions. Part of the GP complex (GP-C) together with glycoprotein G1 and the stable signal peptide. Acidification in the endosome triggers rearrangements, which ultimately leads to a 6 helix bundle formed by the two heptad repeat domains (HR1 and HR2) in post-fusion state. The GP-complex interacts with protein Z, which interacts with ribonucleocapsid; these interactions may induce virion budding. Post-translationally, specific enzymatic cleavages in vivo yield mature proteins. GP-C polyprotein is cleaved in the endoplasmic reticulum by the host protease MBTPS1. Only cleaved glycoprotein is incorporated into virions. In terms of processing, the SSP remains stably associated with the GP complex following cleavage by signal peptidase and plays crucial roles in the trafficking of GP through the secretory pathway. Myristoylation is necessary for GP2-mediated fusion activity.

It localises to the virion membrane. The protein localises to the host endoplasmic reticulum membrane. The protein resides in the host Golgi apparatus membrane. Its subcellular location is the host cell membrane. Functionally, functions as a cleaved signal peptide that is retained as the third component of the GP complex (GP-C). Helps to stabilize the spike complex in its native conformation. The SSP is required for efficient glycoprotein expression, post-translational maturation cleavage of G1 and G2, glycoprotein transport to the cell surface plasma membrane, formation of infectious virus particles, and acid pH-dependent glycoprotein-mediated cell fusion. In terms of biological role, forms the virion spikes together with glycoprotein G2. The glycoprotein spike trimers are connected to the underlying matrix. Interacts with the host receptor leading to virus endocytosis. Its function is as follows. Forms the virion spikes together with glycoprotein G1. The glycoprotein spike trimers are connected to the underlying matrix. Class I viral fusion protein that directs fusion of viral and host endosomal membranes, leading to delivery of the nucleocapsid into the cytoplasm. Membrane fusion is mediated by irreversible conformational changes induced by acidification. The chain is Pre-glycoprotein polyprotein GP complex from Mastomys natalensis (African soft-furred rat).